The chain runs to 118 residues: Small ribosomal subunit protein uS13 (118 aa).

Residues 96 to 118 (PLRGQRTRTNARTRKGPRKAIKK) are disordered.

Belongs to the universal ribosomal protein uS13 family. As to quaternary structure, part of the 30S ribosomal subunit. Forms a loose heterodimer with protein S19. Forms two bridges to the 50S subunit in the 70S ribosome.

Functionally, located at the top of the head of the 30S subunit, it contacts several helices of the 16S rRNA. In the 70S ribosome it contacts the 23S rRNA (bridge B1a) and protein L5 of the 50S subunit (bridge B1b), connecting the 2 subunits; these bridges are implicated in subunit movement. Contacts the tRNAs in the A and P-sites. This Stenotrophomonas maltophilia (strain K279a) protein is Small ribosomal subunit protein uS13.